We begin with the raw amino-acid sequence, 532 residues long: Eukaryotic translation initiation factor 4B1 (532 aa).

3 disordered regions span residues 16–365 (EAER…LEEQ), 401–434 (KKLEKESVAPEIKESDQEPGSNNNHNDLPEIIRG), and 451–532 (RFRQ…REGW). Over residues 26 to 35 (AEATAATADT) the composition is skewed to low complexity. Composition is skewed to gly residues over residues 105 to 120 (RLGGGFSSYGGRSGGR) and 132 to 147 (WSGGGGGGGRRPYGGG). Residues 167–180 (RADEVDDWGKEKKP) are compositionally biased toward basic and acidic residues. Positions 177–184 (EKKPLPSF) match the Nuclear localization signal 1 motif. The span at 193 to 217 (SGDGGGFGGGGSGFGGGGGGGGGGL) shows a compositional bias: gly residues. Positions 237 to 244 (SSTFGSSF) match the Nuclear localization signal 2 motif. The span at 237–247 (SSTFGSSFGDS) shows a compositional bias: low complexity. Basic and acidic residues-rich tracts occupy residues 249-263 (QEERRRLVLEPRKVE) and 286-310 (RPREDVLAEKGLDWKKIDSEIEAKK). Positions 315 to 337 (TSRPTSAHSSRPSSAQSNRSESS) are enriched in low complexity. Basic and acidic residues-rich tracts occupy residues 355 to 365 (AKPREVLLEEQ), 401 to 416 (KKLEKESVAPEIKESD), 472 to 494 (ERTHSRAGSIDETRSFESTERPR), and 507 to 520 (NEQRRNFQGTKERG).

It belongs to the eIF-4 subunit B family. As to quaternary structure, homodimer. Nonspherical monomer. mRNA-discriminating component of initiation complexes. Post-translationally, phosphorylated.

The protein resides in the nucleus. Promotes the eIF4F and eIF4A RNA-dependent ATP-hydrolysis activity with different efficiency depending on mRNAs, thus providing mRNA discrimination during initiation of translation. The chain is Eukaryotic translation initiation factor 4B1 from Arabidopsis thaliana (Mouse-ear cress).